The following is a 206-amino-acid chain: Large ribosomal subunit protein uL4 (206 aa).

Positions 63–93 are disordered; that stretch reads MYKQKGTGRARHHSARAPQFRGGGKAHGPVV. The segment covering 64–77 has biased composition (basic residues); it reads YKQKGTGRARHHSA.

This sequence belongs to the universal ribosomal protein uL4 family. In terms of assembly, part of the 50S ribosomal subunit.

Functionally, one of the primary rRNA binding proteins, this protein initially binds near the 5'-end of the 23S rRNA. It is important during the early stages of 50S assembly. It makes multiple contacts with different domains of the 23S rRNA in the assembled 50S subunit and ribosome. Forms part of the polypeptide exit tunnel. The polypeptide is Large ribosomal subunit protein uL4 (Sinorhizobium fredii (strain NBRC 101917 / NGR234)).